The following is a 569-amino-acid chain: Probable diguanylate cyclase DgcQ (569 aa).

The next 2 membrane-spanning stretches (helical) occupy residues 25 to 45 and 365 to 385; these read LGPGHVVNLCFIVVLLFSTLL and IALTLLWALFTTMLLISWYVI. A GGDEF domain is found at 433 to 568; it reads HPFSVIQVDL…GRNRVCASDN (136 aa). Asp441 provides a ligand contact to Mg(2+). Positions 449, 454, and 458 each coordinate substrate. Residue Glu484 coordinates Mg(2+). Glu484 serves as the catalytic Proton acceptor.

In terms of assembly, homodimer. Mg(2+) serves as cofactor.

The protein resides in the cell inner membrane. It catalyses the reaction 2 GTP = 3',3'-c-di-GMP + 2 diphosphate. It participates in glycan metabolism; bacterial cellulose biosynthesis. It functions in the pathway purine metabolism; 3',5'-cyclic di-GMP biosynthesis. In terms of biological role, catalyzes the synthesis of cyclic-di-GMP (c-di-GMP) via the condensation of 2 GTP molecules. Cyclic-di-GMP is a second messenger which controls cell surface-associated traits in bacteria. Involved in the regulation of cellulose production. The chain is Probable diguanylate cyclase DgcQ from Shigella sonnei (strain Ss046).